The sequence spans 415 residues: Dynein assembly factor with WD repeat domains 1 (415 aa).

WD repeat units follow at residues 90 to 129, 132 to 174, 175 to 214, 217 to 256, 259 to 298, 301 to 340, 343 to 384, and 386 to 415; these read AHIL…ELHT, GHRN…HTFR, GHTA…EALT, GHAA…RIHT, GHRG…CVAT, GHDD…CLAK, GHEG…QVLK, and HTDE…RIWR.

Belongs to the WD repeat WDR69 family.

The protein resides in the cytoplasm. Its subcellular location is the cytoskeleton. The protein localises to the flagellum basal body. It is found in the flagellum axoneme. In terms of biological role, required for axonemal dynein assembly and ciliary motility in ciliated organs, including Kupffer's vesicle, during embryogenesis. Facilitates the onset of robust cilia motility during development. This Xenopus laevis (African clawed frog) protein is Dynein assembly factor with WD repeat domains 1 (daw1).